A 108-amino-acid chain; its full sequence is Urease subunit beta (108 aa).

Belongs to the urease beta subunit family. As to quaternary structure, heterotrimer of UreA (gamma), UreB (beta) and UreC (alpha) subunits. Three heterotrimers associate to form the active enzyme.

The protein localises to the cytoplasm. It carries out the reaction urea + 2 H2O + H(+) = hydrogencarbonate + 2 NH4(+). It functions in the pathway nitrogen metabolism; urea degradation; CO(2) and NH(3) from urea (urease route): step 1/1. The sequence is that of Urease subunit beta from Microcystis aeruginosa (strain NIES-843 / IAM M-2473).